A 415-amino-acid polypeptide reads, in one-letter code: Serine--tRNA ligase (415 aa).

An L-serine-binding site is contributed by 231-233 (TAE). 262–264 (RSE) serves as a coordination point for ATP. Glu285 is a binding site for L-serine. 349-352 (EISS) serves as a coordination point for ATP. Ser383 serves as a coordination point for L-serine.

This sequence belongs to the class-II aminoacyl-tRNA synthetase family. Type-1 seryl-tRNA synthetase subfamily. Homodimer. The tRNA molecule binds across the dimer.

The protein resides in the cytoplasm. It carries out the reaction tRNA(Ser) + L-serine + ATP = L-seryl-tRNA(Ser) + AMP + diphosphate + H(+). The enzyme catalyses tRNA(Sec) + L-serine + ATP = L-seryl-tRNA(Sec) + AMP + diphosphate + H(+). It participates in aminoacyl-tRNA biosynthesis; selenocysteinyl-tRNA(Sec) biosynthesis; L-seryl-tRNA(Sec) from L-serine and tRNA(Sec): step 1/1. Catalyzes the attachment of serine to tRNA(Ser). Is also able to aminoacylate tRNA(Sec) with serine, to form the misacylated tRNA L-seryl-tRNA(Sec), which will be further converted into selenocysteinyl-tRNA(Sec). The polypeptide is Serine--tRNA ligase (Helicobacter pylori (strain G27)).